We begin with the raw amino-acid sequence, 92 residues long: uncharacterized protein (92 aa).

The region spanning 24-89 is the HMA domain; it reads KQIVLKVKEM…AIHKLKYTAE (66 aa). The a metal cation site is built by Cys35 and Cys38.

This is an uncharacterized protein from Haemophilus influenzae (strain ATCC 51907 / DSM 11121 / KW20 / Rd).